A 258-amino-acid polypeptide reads, in one-letter code: Acyl-[acyl-carrier-protein]--UDP-N-acetylglucosamine O-acyltransferase (258 aa).

Belongs to the transferase hexapeptide repeat family. LpxA subfamily. In terms of assembly, homotrimer.

It is found in the cytoplasm. The enzyme catalyses a (3R)-hydroxyacyl-[ACP] + UDP-N-acetyl-alpha-D-glucosamine = a UDP-3-O-[(3R)-3-hydroxyacyl]-N-acetyl-alpha-D-glucosamine + holo-[ACP]. It participates in glycolipid biosynthesis; lipid IV(A) biosynthesis; lipid IV(A) from (3R)-3-hydroxytetradecanoyl-[acyl-carrier-protein] and UDP-N-acetyl-alpha-D-glucosamine: step 1/6. Involved in the biosynthesis of lipid A, a phosphorylated glycolipid that anchors the lipopolysaccharide to the outer membrane of the cell. The protein is Acyl-[acyl-carrier-protein]--UDP-N-acetylglucosamine O-acyltransferase of Saccharophagus degradans (strain 2-40 / ATCC 43961 / DSM 17024).